The following is a 326-amino-acid chain: Methyltransferase phqN (326 aa).

It belongs to the class I-like SAM-binding methyltransferase superfamily. Erg6/SMT family.

It functions in the pathway alkaloid biosynthesis. Methyltransferase; part of the gene cluster that mediates the biosynthesis of paraherquamide, a fungal indole alkaloid that belongs to a family of natural products containing a characteristic bicyclo[2.2.2]diazaoctane core. The first steps in the biosynthesis of paraherquamide is the production of the beta-methyl-proline precursor from L-isoleucine. They require oxidation of a terminally hydroxylated L-isoleucine to the corresponding aldehyde by enzymes which have still to be identified. Spontaneous cyclization and dehydration would yield the 4-methyl pyrolline-5-carboxylic acid, which is then reduced by the pyrroline-5-carboxylate reductase phqD leading to the beta-methyl-proline precursor. The next step of paraherquamide biosynthesis involves coupling of beta-methyl-proline and L-tryptophan by the bimodular NRPS phqB, to produce a monooxopiperazine intermediate. The reductase (R) domain of phqB utilizes NADPH for hydride transfer to reduce the thioester bond of the T domain-tethered linear dipeptide to a hemithioaminal intermediate, which spontaneously cleaves the C-S bond to release the aldehyde product. This compound undergoes spontaneous cyclization and dehydration to give a dienamine which is reverse prenylated at C-2 by the reverse prenyltransferase phqJ. The other prenyltransferase present in the cluster, phqI may be a redundant gene in the pathway. During biosynthetic assembly, the key step to produce the polycyclic core is catalyzed by the bifunctional reductase and intramolecular [4+2] Diels-Alderase, phqE, resulting in formation of the [2.2.2] diazaoctane intermediate preparaherquamide. Following formation of preparaherquamide, an indole 2,3-epoxidation-initiated pinacol-like rearrangement is catalyzed by the phqK FAD-dependent monooxygenase. The prenyltransferase phqA, the cytochrome P450 monooxygenase phqL, and the FAD-linked oxidoreductase phqH (or the cytochrome P450 monooxygenase phqM), are proposed to be involved in the formation of the pyran ring. The FAD-dependent monooxygenase phqK is likely responsible for generation of the spiro-oxindole, and the N-methylation is likely mediated by the phqN methyltransferase leading to the isolable natural product paraherquamide F. However, the order of these biosynthetic steps has still to be determined. In late-stage paraherquamide biosynthesis, the third P450 monooxygenase, phqO, is probably responsible for the C-14 hydroxylation, transforming paraherquamide F to paraherquamide G, and paraherquamide E to the final product paraherquamide A. The expansion from the 6-membered ring pyran (in paraherquamides F and G) to the 7-membered dioxepin ring (in paraherquamides A and E) represents a poorly understood but intriguing process that probably involves the 2-oxoglutarate-dependent dioxygenase phqC. Finally, the remaining members of the paraherquamide cluster, including phqI as well as phqM (or phqH), do not have a clearly prescribed role and appear to be redundant. In Penicillium fellutanum, this protein is Methyltransferase phqN.